Here is a 507-residue protein sequence, read N- to C-terminus: Probable malate:quinone oxidoreductase 2 (507 aa).

It belongs to the MQO family. It depends on FAD as a cofactor.

It catalyses the reaction (S)-malate + a quinone = a quinol + oxaloacetate. The protein operates within carbohydrate metabolism; tricarboxylic acid cycle; oxaloacetate from (S)-malate (quinone route): step 1/1. This chain is Probable malate:quinone oxidoreductase 2, found in Pseudomonas aeruginosa (strain ATCC 15692 / DSM 22644 / CIP 104116 / JCM 14847 / LMG 12228 / 1C / PRS 101 / PAO1).